Consider the following 123-residue polypeptide: Aberrant microtubules protein 1 (123 aa).

Required for normal microtubule organization. The polypeptide is Aberrant microtubules protein 1 (ABM1) (Saccharomyces cerevisiae (strain ATCC 204508 / S288c) (Baker's yeast)).